A 295-amino-acid chain; its full sequence is Ethanolamine ammonia-lyase small subunit (295 aa).

V207, E228, and C258 together coordinate adenosylcob(III)alamin.

Belongs to the EutC family. In terms of assembly, the basic unit is a heterodimer which dimerizes to form tetramers. The heterotetramers trimerize; 6 large subunits form a core ring with 6 small subunits projecting outwards. Requires adenosylcob(III)alamin as cofactor.

Its subcellular location is the bacterial microcompartment. It catalyses the reaction ethanolamine = acetaldehyde + NH4(+). The protein operates within amine and polyamine degradation; ethanolamine degradation. Its function is as follows. Catalyzes the deamination of various vicinal amino-alcohols to oxo compounds. Allows this organism to utilize ethanolamine as the sole source of nitrogen and carbon in the presence of external vitamin B12. This chain is Ethanolamine ammonia-lyase small subunit, found in Escherichia coli (strain SE11).